A 373-amino-acid polypeptide reads, in one-letter code: Tomoregulin-1 (373 aa).

An N-terminal signal peptide occupies residues 1–36 (MGAQAPLRLPAAPPLAVCGYTSVLLLFAFCLPGSGA). Topologically, residues 37-323 (SNQPAGGGGD…VPSRQKLTHV (287 aa)) are extracellular. N-linked (GlcNAc...) asparagine glycosylation is present at asparagine 56. The Kazal-like 1 domain maps to 91–138 (ACQFQCHTNYIPVCGSNGDTYQNECFLRRAACKHQKDITVVARGPCYS). 3 cysteine pairs are disulfide-bonded: cysteine 92–cysteine 122, cysteine 96–cysteine 115, and cysteine 104–cysteine 136. Asparagine 140 carries an N-linked (GlcNAc...) asparagine glycan. The interval 140 to 162 (NGSGSGEGEEEGSGAGAHRKHSK) is disordered. The 49-residue stretch at 182–230 (VCNIDCSGYSFNPVCASDGSSYNNPCFVREASCIRQEQIDIRHLGHCTD) folds into the Kazal-like 2 domain. Intrachain disulfides connect cysteine 183–cysteine 214, cysteine 187–cysteine 207, cysteine 196–cysteine 228, cysteine 268–cysteine 281, cysteine 276–cysteine 292, and cysteine 294–cysteine 303. Residues 264-304 (SHMPCPENLNGYCIHGKCEFIYSTQKASCRCESGYTGQHCE) enclose the EGF-like domain. Residues 324–344 (LIAAIIGAVQIAIIVAIVMCI) form a helical membrane-spanning segment. Topologically, residues 345–373 (TRKCPKNNRGRRQKQNLGHFTSETSSRMV) are cytoplasmic. Residues 352–373 (NRGRRQKQNLGHFTSETSSRMV) are disordered. The span at 359–373 (QNLGHFTSETSSRMV) shows a compositional bias: polar residues.

Belongs to the tomoregulin family. In terms of assembly, may interact with ST14.

The protein resides in the cell membrane. In terms of biological role, neuron-specific restriction factor that prevents herpes simplex virus 1 (HHV-1) infection in the brain by blocking viral entry. Also able to restrict herpes simplex virus 2 (HHV-2) infection, although to a lesser extent. Acts by preventing the association between the viral glycoprotein D (gD) and its cell surface receptor NECTIN1, thereby inhibiting fusion of the virus and the cell membrane. Also able to prevent the association between the viral glycoprotein B (gB) and MYH9/NMMHC-IIA and MYH10/NMMHC-IIB receptors. The sequence is that of Tomoregulin-1 (Tmeff1) from Rattus norvegicus (Rat).